We begin with the raw amino-acid sequence, 250 residues long: Lymphocyte function-associated antigen 3 (250 aa).

The first 28 residues, Met-1–Cys-28, serve as a signal peptide directing secretion. The Extracellular portion of the chain corresponds to Phe-29–Arg-215. Residues Ser-30 to Leu-121 enclose the Ig-like domain. N-linked (GlcNAc...) asparagine glycosylation is found at Asn-40, Asn-94, Asn-109, Asn-135, Asn-169, and Asn-195. Cys-142 and Cys-187 are disulfide-bonded. Residues Tyr-216–Leu-238 form a helical membrane-spanning segment. Over Lys-239–Asn-250 the chain is Cytoplasmic.

Interacts with CD2. Interacts with CMTM6. As to quaternary structure, (Microbial infection) Interacts with human cytomegalovirus protein UL148; this interaction retains immature CD58 intracellularly.

It is found in the cell membrane. In terms of biological role, ligand of the T-lymphocyte CD2 glycoprotein. This interaction is important in mediating thymocyte interactions with thymic epithelial cells, antigen-independent and -dependent interactions of T-lymphocytes with target cells and antigen-presenting cells and the T-lymphocyte rosetting with erythrocytes. In addition, the LFA-3/CD2 interaction may prime response by both the CD2+ and LFA-3+ cells. This Homo sapiens (Human) protein is Lymphocyte function-associated antigen 3 (CD58).